We begin with the raw amino-acid sequence, 159 residues long: Transcription elongation factor GreA (159 aa).

Residues 3–37 adopt a coiled-coil conformation; the sequence is TNKEVVLTYEGLQKLEQELENLKTVKRREVAERIK.

The protein belongs to the GreA/GreB family.

Functionally, necessary for efficient RNA polymerase transcription elongation past template-encoded arresting sites. The arresting sites in DNA have the property of trapping a certain fraction of elongating RNA polymerases that pass through, resulting in locked ternary complexes. Cleavage of the nascent transcript by cleavage factors such as GreA or GreB allows the resumption of elongation from the new 3'terminus. GreA releases sequences of 2 to 3 nucleotides. This Acetivibrio thermocellus (strain ATCC 27405 / DSM 1237 / JCM 9322 / NBRC 103400 / NCIMB 10682 / NRRL B-4536 / VPI 7372) (Clostridium thermocellum) protein is Transcription elongation factor GreA.